The following is a 286-amino-acid chain: tRNA (guanine-N(1)-)-methyltransferase (286 aa).

S-adenosyl-L-methionine is bound by residues glycine 116 and 140 to 145 (IGDYVL). Residues 232–286 (DALPPGSLTPHEEALAAEARLHAGRSAETPPPAGAAGSQAEGPPGTSPSDAAVAH) are disordered.

It belongs to the RNA methyltransferase TrmD family. Homodimer.

The protein localises to the cytoplasm. It catalyses the reaction guanosine(37) in tRNA + S-adenosyl-L-methionine = N(1)-methylguanosine(37) in tRNA + S-adenosyl-L-homocysteine + H(+). In terms of biological role, specifically methylates guanosine-37 in various tRNAs. The protein is tRNA (guanine-N(1)-)-methyltransferase of Acidothermus cellulolyticus (strain ATCC 43068 / DSM 8971 / 11B).